We begin with the raw amino-acid sequence, 300 residues long: Transacylase cctO (300 aa).

A helical transmembrane segment spans residues 52-72 (IVYVSLTFFVVSIGLNFILAI). Short sequence motifs (HXXHC) lie at residues 185–189 (HQLGC) and 225–229 (HVDQC). N270 carries N-linked (GlcNAc...) asparagine glycosylation.

This sequence belongs to the ustYa family.

Its subcellular location is the membrane. Its pathway is mycotoxin biosynthesis. Its function is as follows. Transacylase; part of the gene cluster that mediates the biosynthesis of the mycotoxin cyclochlorotine, a hepatotoxic and carcinogenic cyclic chlorinated pentapeptide. Within the pathway, cctO catalyzes the intramolecular O,N-transacylation from isocyclochlorotine to cyclochlorotine. The NRPS cctN initially catalyzes the condensation of L-serine (Ser), Pro, L-2-aminobutyrate (2Abu), Ser, and beta-Phe in this order to produce isocyclotine. After the dichlorination of Pro2 catalyzed by cctP2 to produce isocyclochlorotine, the cctO-mediated transacylation of isocyclochlorotine can furnish cyclochlorotine. The subsequent hydroxylation of cyclochlorotine by cctR yields hydroxycyclochlorotine as the final product. CctP1 probably acts as a phenylalanine aminomutase and provides the uncommon building block beta-Phe. Furthermore, 2Abu can be synthesized from threonine by one of the threonine dehydratases and transaminases localized outside of the cluster. The functions of the remaining proteins encoded by the cluster, cctM and cctT, have not been identified yet. The chain is Transacylase cctO from Talaromyces islandicus (Penicillium islandicum).